The sequence spans 1009 residues: DNA ligase 3 (1009 aa).

The N-terminal 42 residues, 1–42 (MSLAFKIFFPQTLRALSRKELCLFRKHHWRDVRQFSQWSETD), are a transit peptide targeting the mitochondrion. The segment at 93–185 (FCVDYAKRGT…QITQHIADLS (93 aa)) adopts a PARP-type zinc-finger fold. Positions 105, 108, 139, and 142 each coordinate Zn(2+). Phosphoserine is present on residues Ser-210, Ser-216, Ser-227, and Ser-242. Residues 224-256 (RKFSGFSAKPNNSGEAPSSPTPKRSLSSSKCDP) are disordered. The span at 240 to 252 (PSSPTPKRSLSSS) shows a compositional bias: low complexity. Interaction with DNA stretches follow at residues 277–280 (PSYN), 318–323 (VYNLND), 388–391 (TKED), and 421–427 (KMNSGAK). Glu-506 contributes to the ATP binding site. Catalysis depends on Lys-508, which acts as the N6-AMP-lysine intermediate. Residues Arg-513 and Arg-528 each contribute to the ATP site. The Mg(2+) site is built by Glu-560 and Glu-655. Residues Lys-660, Arg-671, and Lys-675 each contribute to the ATP site. The tract at residues 842–917 (AGDEGSSTTG…LATKSSPVKV (76 aa)) is disordered. 2 stretches are compositionally biased toward low complexity: residues 845 to 854 (EGSSTTGGSS) and 863 to 877 (SAVS…SAST). Residues 884 to 898 (LSNSNSKDGNMQTAK) are compositionally biased toward polar residues. A Phosphoserine modification is found at Ser-913. The 77-residue stretch at 933–1009 (VLLDIFTGVR…IRKRRLVAPC (77 aa)) folds into the BRCT domain.

This sequence belongs to the ATP-dependent DNA ligase family. As to quaternary structure, isoform 3 interacts (via BRCT domain) with the nuclear DNA-repair protein XRCC1. Interacts with POLG. Interacts with POLB. The cofactor is Mg(2+). In terms of tissue distribution, testis, thymus, prostate and heart.

Its subcellular location is the mitochondrion. The protein localises to the nucleus. The enzyme catalyses ATP + (deoxyribonucleotide)n-3'-hydroxyl + 5'-phospho-(deoxyribonucleotide)m = (deoxyribonucleotide)n+m + AMP + diphosphate.. Functionally, isoform 3 functions as a heterodimer with DNA-repair protein XRCC1 in the nucleus and can correct defective DNA strand-break repair and sister chromatid exchange following treatment with ionizing radiation and alkylating agents. Isoform 1 is targeted to mitochondria, where it functions as a DNA ligase in mitochondrial base-excision DNA repair. In Homo sapiens (Human), this protein is DNA ligase 3 (LIG3).